The following is a 185-amino-acid chain: MISAGDFKNGVTFELDGQIFQVIEFQHVKPGKGAAFVRTKLKNIVTGATIEKTFNPTDKMPKAHIERKDMQYLYNDGDLYYFMDTETFEQLPLGKDKIGDALKFVKENEIVKVLSHKGNVFGIEPPNFVELEVTDTEPGFKGDTATGATKPAIVETGASIKVPLFVNKGDIIRIDTRTGEYMERV.

It belongs to the elongation factor P family.

The protein resides in the cytoplasm. The protein operates within protein biosynthesis; polypeptide chain elongation. In terms of biological role, involved in peptide bond synthesis. Stimulates efficient translation and peptide-bond synthesis on native or reconstituted 70S ribosomes in vitro. Probably functions indirectly by altering the affinity of the ribosome for aminoacyl-tRNA, thus increasing their reactivity as acceptors for peptidyl transferase. In Acetivibrio thermocellus (strain ATCC 27405 / DSM 1237 / JCM 9322 / NBRC 103400 / NCIMB 10682 / NRRL B-4536 / VPI 7372) (Clostridium thermocellum), this protein is Elongation factor P.